We begin with the raw amino-acid sequence, 136 residues long: UPF0310 protein SMU_442 (136 aa).

Belongs to the UPF0310 family.

The protein is UPF0310 protein SMU_442 of Streptococcus mutans serotype c (strain ATCC 700610 / UA159).